We begin with the raw amino-acid sequence, 268 residues long: Glucosamine-6-phosphate deaminase (268 aa).

Residue Asp-72 is the Proton acceptor; for enolization step of the active site. The For ring-opening step role is filled by Asp-141. His-143 acts as the Proton acceptor; for ring-opening step in catalysis. Glu-148 acts as the For ring-opening step in catalysis.

This sequence belongs to the glucosamine/galactosamine-6-phosphate isomerase family. NagB subfamily.

It catalyses the reaction alpha-D-glucosamine 6-phosphate + H2O = beta-D-fructose 6-phosphate + NH4(+). Its pathway is amino-sugar metabolism; N-acetylneuraminate degradation; D-fructose 6-phosphate from N-acetylneuraminate: step 5/5. With respect to regulation, allosterically activated by N-acetylglucosamine 6-phosphate (GlcNAc6P). Its function is as follows. Catalyzes the reversible isomerization-deamination of glucosamine 6-phosphate (GlcN6P) to form fructose 6-phosphate (Fru6P) and ammonium ion. The protein is Glucosamine-6-phosphate deaminase of Borreliella afzelii (strain PKo) (Borrelia afzelii).